Here is an 89-residue protein sequence, read N- to C-terminus: Small ribosomal subunit protein uS15 (89 aa).

The protein belongs to the universal ribosomal protein uS15 family. In terms of assembly, part of the 30S ribosomal subunit. Forms a bridge to the 50S subunit in the 70S ribosome, contacting the 23S rRNA.

One of the primary rRNA binding proteins, it binds directly to 16S rRNA where it helps nucleate assembly of the platform of the 30S subunit by binding and bridging several RNA helices of the 16S rRNA. Functionally, forms an intersubunit bridge (bridge B4) with the 23S rRNA of the 50S subunit in the ribosome. This is Small ribosomal subunit protein uS15 from Chlorobium phaeovibrioides (strain DSM 265 / 1930) (Prosthecochloris vibrioformis (strain DSM 265)).